The primary structure comprises 1101 residues: Protein diaphanous homolog 2 (1101 aa).

Met1 is subject to N-acetylmethionine. Positions 1-44 are disordered; sequence MEQPGAAASGAGGGSEEPGGGRSNKRSAGNRAANEEETKNKPKL. Residues 10–22 are compositionally biased toward gly residues; the sequence is GAGGGSEEPGGGR. Residues 98 to 464 enclose the GBD/FH3 domain; that stretch reads SLNLSEKEVL…QIVLHCSGMD (367 aa). Coiled coils occupy residues 366 to 418 and 487 to 547; these read KEKE…MLKD and KAKV…SSSG. Polar residues predominate over residues 536–546; sequence RTQAQVLSSSS. 3 disordered regions span residues 536–594, 1010–1048, and 1070–1101; these read RTQA…PPPP, NKRREMEEKTRRAKLAKEKAEQEKLERQKKKKQLIDINK, and RDRRKRIPRNPDNRRVPLERSRSRHNGAISSK. The segment covering 549-594 has biased composition (pro residues); that stretch reads PGPPAAPPLPGVGPPPPPPAPPLPGGAPLPPPPPPLPGMMGIPPPP. The FH1 domain occupies 549–623; that stretch reads PGPPAAPPLP…PPPGISLNLP (75 aa). The region spanning 628–1028 is the FH2 domain; sequence QKKMYKPEVS…TRRAKLAKEK (401 aa). Residues 903 to 1053 are a coiled coil; that stretch reads SASKVSAQIL…IDINKEGDET (151 aa). 2 stretches are compositionally biased toward basic and acidic residues: residues 1010–1035 and 1078–1090; these read NKRREMEEKTRRAKLAKEKAEQEKLE and RNPDNRRVPLERS. One can recognise a DAD domain in the interval 1051-1081; sequence DETGVMDNLLEALQSGAAFRDRRKRIPRNPD.

This sequence belongs to the formin homology family. Diaphanous subfamily. In terms of assembly, isoform 3 interacts with RHOD in the GTP-bound form. In terms of tissue distribution, expressed in testis, ovary, small intestine, prostate, lung, liver, kidney and leukocytes.

It localises to the cytoplasm. The protein localises to the cytosol. It is found in the early endosome. Functionally, could be involved in oogenesis. Involved in the regulation of endosome dynamics. Implicated in a novel signal transduction pathway, in which isoform 3 and CSK are sequentially activated by RHOD to regulate the motility of early endosomes through interactions with the actin cytoskeleton. The protein is Protein diaphanous homolog 2 (DIAPH2) of Homo sapiens (Human).